The following is a 373-amino-acid chain: MFVDSVELLISSGKGGAGAISFWTEKFVIKGGPDGGDGGRGGSVFFKVDNNTDTLSGLRGRNHIKAENGRPGEGRKKYGRKGQDTTIIVPPGTTVVDMETGEELLDLVEEGQVVKFLEGGKGGLGNMHFKSSTNQRPTYAQPGLPGITKQVRLEMKLIADVGLVGYPNVGKSTLIATLSNARPQVANYEFTTLTPKLGVVHISDYDSFMMADIPGIIEGASDGRGLGLEFLKHIERTKTLLLMIDAANYREMKYQYETLLVELDRYSETLAGRKHAIAITKIDSLSQDEVNTLTQTFLDDIGLKANDTLKKYKADMNYLSYGFKTDFGVPLPIKEPLFVLPISSVAHLNTEALRYALGDFVKNVKEETEAEEK.

The 158-residue stretch at 1-158 (MFVDSVELLI…KQVRLEMKLI (158 aa)) folds into the Obg domain. Residues 62–83 (NHIKAENGRPGEGRKKYGRKGQ) form a disordered region. Over residues 64 to 76 (IKAENGRPGEGRK) the composition is skewed to basic and acidic residues. The OBG-type G domain occupies 159–362 (ADVGLVGYPN…LRYALGDFVK (204 aa)). GTP-binding positions include 165-172 (GYPNVGKS), 190-194 (FTTLT), 212-215 (DIPG), 280-283 (TKID), and 343-345 (SSV). The Mg(2+) site is built by Ser-172 and Thr-192.

The protein belongs to the TRAFAC class OBG-HflX-like GTPase superfamily. OBG GTPase family. As to quaternary structure, monomer. Requires Mg(2+) as cofactor.

The protein resides in the cytoplasm. Its function is as follows. An essential GTPase which binds GTP, GDP and possibly (p)ppGpp with moderate affinity, with high nucleotide exchange rates and a fairly low GTP hydrolysis rate. Plays a role in control of the cell cycle, stress response, ribosome biogenesis and in those bacteria that undergo differentiation, in morphogenesis control. This Sulfurovum sp. (strain NBC37-1) protein is GTPase Obg.